Here is a 386-residue protein sequence, read N- to C-terminus: MEVISTNTNGSTIFKNGAIPMNGHQSGTSKHLNGYQNGTSKHQNGHHNGTSEHRNGHQNGISEHQNGHQNGTSEQQNGTISHDNGNELLGNSNSIKLGWFSEFSALWPGEAFSLKVEKLLFQGKSDYQDVMLFESATYGKVLTLDGAIQHTENGGFPYTEMIVHLPLGSIPNPKKVLIIGGGIGFTLFEMLRYPTIEKIDIVEIDDVVVDVSRKSFPYLAANFNDPRVTLVLGDGAAFVKAAQAGYYDAIIVDSSDPIGPAKDLFERPFFEAVAKALRPGGVVCTQAESIWLHMHIIKQIIANCRQVFKGSVNYAWTTVPTYPTGVIGYMLCSTEGPEVDFKNPINPIDKETTQVKSKLAPLKFYNSDIHKAAFILPSFARSMIES.

3 stretches are compositionally biased toward polar residues: residues M1–F14, G23–N48, and H57–E87. Positions M1–E87 are disordered. One can recognise a PABS domain in the interval L97 to T334. Residues Q128, E203, and D234–G235 contribute to the S-adenosyl-L-methionine site. Catalysis depends on D253, which acts as the Proton acceptor. Residue Y322 coordinates S-adenosyl-L-methionine.

This sequence belongs to the class I-like SAM-binding methyltransferase superfamily. Putrescine methyltransferase family. As to expression, predominantly expressed in roots.

The catalysed reaction is putrescine + S-adenosyl-L-methionine = N-methylputrescine + S-adenosyl-L-homocysteine + H(+). It functions in the pathway alkaloid biosynthesis; nicotine biosynthesis. In terms of biological role, involved in the biosynthesis of pyridine alkaloid natural products, leading mainly to the production of anabasine, anatabine, nicotine and nornicotine, effective deterrents against herbivores with antiparasitic and pesticide properties (neurotoxins); nornicotine serves as the precursor in the synthesis of the carcinogen compound N'-nitrosonornicotine (NNN). Methyltransferase that mediates the conversion of putrescine to N-methylputrescine. Promotes leaves ripening. The sequence is that of Putrescine N-methyltransferase 4 from Nicotiana tabacum (Common tobacco).